The primary structure comprises 294 residues: Protoheme IX farnesyltransferase (294 aa).

8 helical membrane-spanning segments follow: residues 19 to 39 (PKQT…AGGM), 41 to 61 (LDAL…TTSV), 89 to 109 (VEAL…SYLI), 111 to 131 (PWTA…YTMW), 138 to 158 (LSII…WAAA), 166 to 186 (AIMI…YISI), 218 to 238 (VLMI…PIFL), and 272 to 292 (SPVE…RILW).

This sequence belongs to the UbiA prenyltransferase family. Protoheme IX farnesyltransferase subfamily.

It localises to the cell membrane. The catalysed reaction is heme b + (2E,6E)-farnesyl diphosphate + H2O = Fe(II)-heme o + diphosphate. It functions in the pathway porphyrin-containing compound metabolism; heme O biosynthesis; heme O from protoheme: step 1/1. Converts heme B (protoheme IX) to heme O by substitution of the vinyl group on carbon 2 of heme B porphyrin ring with a hydroxyethyl farnesyl side group. This is Protoheme IX farnesyltransferase from Korarchaeum cryptofilum (strain OPF8).